The chain runs to 133 residues: Glycine cleavage system H protein (133 aa).

In terms of domain architecture, Lipoyl-binding spans 24–106; the sequence is IATIGISAYA…YGDGWLLKVR (83 aa). Lys65 is subject to N6-lipoyllysine.

This sequence belongs to the GcvH family. As to quaternary structure, the glycine cleavage system is composed of four proteins: P, T, L and H. (R)-lipoate is required as a cofactor.

The glycine cleavage system catalyzes the degradation of glycine. The H protein shuttles the methylamine group of glycine from the P protein to the T protein. The chain is Glycine cleavage system H protein from Crocosphaera subtropica (strain ATCC 51142 / BH68) (Cyanothece sp. (strain ATCC 51142)).